The primary structure comprises 161 residues: Nucleotide-binding protein Shew185_3601 (161 aa).

It belongs to the YajQ family.

Functionally, nucleotide-binding protein. This Shewanella baltica (strain OS185) protein is Nucleotide-binding protein Shew185_3601.